Here is a 229-residue protein sequence, read N- to C-terminus: UPF0173 metal-dependent hydrolase SERP1270 (229 aa).

This sequence belongs to the UPF0173 family.

This chain is UPF0173 metal-dependent hydrolase SERP1270, found in Staphylococcus epidermidis (strain ATCC 35984 / DSM 28319 / BCRC 17069 / CCUG 31568 / BM 3577 / RP62A).